The primary structure comprises 577 residues: Galectin-3-binding protein (577 aa).

The signal sequence occupies residues 1–18 (MALLWLLSVFLLVPGTQG). The region spanning 24 to 124 (MRLVNGASAN…HEKDAGVVCS (101 aa)) is the SRCR domain. Cystine bridges form between cysteine 49-cysteine 113, cysteine 62-cysteine 123, and cysteine 93-cysteine 103. An N-linked (GlcNAc...) asparagine glycan is attached at asparagine 69. N-linked (GlcNAc...) asparagine glycosylation occurs at asparagine 125. The BTB domain occupies 153 to 221 (CDLFIQVTGQ…FYSRRIEVSM (69 aa)). One can recognise a BACK domain in the interval 260–360 (PLDLYAYARA…MLPQELFELQ (101 aa)). N-linked (GlcNAc...) asparagine glycans are attached at residues asparagine 362, asparagine 398, asparagine 543, and asparagine 572.

As to quaternary structure, homodimers and homomultimers. The multimers form ring-like structures with a diameter of 30-40 nm. Binds LGALS1 and LGALS3. Binds ITGB1, COL4A1, COL5A1, COL6A1, FN1 and NID. Interacts with PPIC (in vitro). The unglycosylated form interacts with PDE4DIP isoform 2/MMG8/SMYLE; this interaction may connect a pericentrosomal complex to the gamma-tubulin ring complex (gamma-TuRC) to promote microtubule assembly and acetylation. Post-translationally, N-glycosylated. In terms of tissue distribution, detected in embryo, liver, spleen, kidney, lung, heart, intestine, thymus and lymph node.

It is found in the secreted. The protein resides in the extracellular space. The protein localises to the extracellular matrix. In terms of biological role, promotes integrin-mediated cell adhesion. May stimulate host defense against viruses and tumor cells. The polypeptide is Galectin-3-binding protein (Lgals3bp) (Mus musculus (Mouse)).